Here is a 377-residue protein sequence, read N- to C-terminus: Nitric oxide reductase FlRd-NAD(+) reductase (377 aa).

Belongs to the FAD-dependent oxidoreductase family. Requires FAD as cofactor.

It is found in the cytoplasm. The enzyme catalyses 2 reduced [nitric oxide reductase rubredoxin domain] + NAD(+) + H(+) = 2 oxidized [nitric oxide reductase rubredoxin domain] + NADH. It participates in nitrogen metabolism; nitric oxide reduction. Its function is as follows. One of at least two accessory proteins for anaerobic nitric oxide (NO) reductase. Reduces the rubredoxin moiety of NO reductase. In Escherichia coli O7:K1 (strain IAI39 / ExPEC), this protein is Nitric oxide reductase FlRd-NAD(+) reductase.